A 345-amino-acid polypeptide reads, in one-letter code: Centromere protein U (345 aa).

Composition is skewed to basic residues over residues 1-10 (MSSKKRTKRN) and 19-29 (HKGRSHPRRKF). Disordered regions lie at residues 1 to 37 (MSSK…EPDV) and 64 to 153 (AVDA…SSVQ). Positions 88–106 (NAERSEKMLLETPEGDVHE) are enriched in basic and acidic residues. The segment covering 142 to 152 (SDSSVNSPSSV) has biased composition (low complexity). Residues 201 to 294 (CSAFEDQVTD…QDYLDYREEN (94 aa)) adopt a coiled-coil conformation. The short motif at 222-239 (KKKNAKVVADIKKKRQRL) is the Nuclear localization signal element.

The protein belongs to the CENP-U/AME1 family. In terms of assembly, interacts with CENPH-CENPI complex at the kinetochore.

Its subcellular location is the nucleus. It localises to the chromosome. The protein localises to the centromere. In terms of biological role, probable component of a centromeric complex involved in assembly of kinetochore proteins, mitotic progression and chromosome segregation. Required for maintenance of sister chromatid adhesion during mitotic checkpoint activation. The chain is Centromere protein U (CENPU) from Gallus gallus (Chicken).